Here is a 475-residue protein sequence, read N- to C-terminus: Probable UDP-N-acetylglucosamine pyrophosphorylase (475 aa).

Residues L103–G106 carry the Substrate binding motif. UTP contacts are provided by residues L103–G106, K117, Q194, and G220. N221 contacts substrate. D251 contributes to the UTP binding site. A Substrate binding motif is present at residues E301–Y302. K378 is a UTP binding site. S405 carries the phosphoserine modification. K410 serves as a coordination point for substrate.

Belongs to the UDPGP type 1 family.

It localises to the cytoplasm. Its subcellular location is the nucleus. It catalyses the reaction N-acetyl-alpha-D-glucosamine 1-phosphate + UTP + H(+) = UDP-N-acetyl-alpha-D-glucosamine + diphosphate. It participates in nucleotide-sugar biosynthesis; UDP-N-acetyl-alpha-D-glucosamine biosynthesis; UDP-N-acetyl-alpha-D-glucosamine from N-acetyl-alpha-D-glucosamine 1-phosphate: step 1/1. The protein is Probable UDP-N-acetylglucosamine pyrophosphorylase (uap1) of Schizosaccharomyces pombe (strain 972 / ATCC 24843) (Fission yeast).